We begin with the raw amino-acid sequence, 587 residues long: Arginine--tRNA ligase (587 aa).

The 'HIGH' region signature appears at 127–137 (PNLAKEMHVGH).

This sequence belongs to the class-I aminoacyl-tRNA synthetase family. In terms of assembly, monomer.

The protein resides in the cytoplasm. It catalyses the reaction tRNA(Arg) + L-arginine + ATP = L-arginyl-tRNA(Arg) + AMP + diphosphate. This Pseudomonas aeruginosa (strain UCBPP-PA14) protein is Arginine--tRNA ligase.